Consider the following 243-residue polypeptide: Probable transcriptional regulatory protein BPP2422 (243 aa).

The interval 1-21 (MAGHSKWANIQHRKGRQDAKR) is disordered.

The protein belongs to the TACO1 family.

The protein resides in the cytoplasm. The sequence is that of Probable transcriptional regulatory protein BPP2422 from Bordetella parapertussis (strain 12822 / ATCC BAA-587 / NCTC 13253).